The following is a 308-amino-acid chain: Putative transcription elongation factor S-II (308 aa).

The TFIIS N-terminal domain maps to 5 to 84 (EETQSLCKQV…KDWKNVVDGK (80 aa)). A disordered region spans residues 82-126 (DGKSKSQDDGGAPPAKKHRKESVEEAKPEKKKIEAPYKRPEPSSR). Over residues 102–125 (ESVEEAKPEKKKIEAPYKRPEPSS) the composition is skewed to basic and acidic residues. Positions 148-263 (TRLKSAQLLL…EHQMSVQQGT (116 aa)) constitute a TFIIS central domain. A TFIIS-type zinc finger spans residues 266–306 (DMFKCGKCGKKNCTYTQLQTRSSDEPMTTFVFCLECGNRWK). Cys-270, Cys-273, Cys-298, and Cys-301 together coordinate Zn(2+).

Belongs to the TFS-II family.

It localises to the nucleus. Its function is as follows. Necessary for efficient RNA polymerase II transcription elongation past template-encoded arresting sites. The arresting sites in DNA have the property of trapping a certain fraction of elongating RNA polymerases that pass through, resulting in locked ternary complexes. Cleavage of the nascent transcript by S-II allows the resumption of elongation from the new 3'-terminus. This chain is Putative transcription elongation factor S-II, found in Caenorhabditis elegans.